A 329-amino-acid chain; its full sequence is Protein STRICTOSIDINE SYNTHASE-LIKE 11 (329 aa).

The first 23 residues, 1 to 23 (MMRSFVSLISLLLLLSFSSSVLS), serve as a signal peptide directing secretion. Residues asparagine 37 and asparagine 79 are each glycosylated (N-linked (GlcNAc...) asparagine).

This sequence belongs to the strictosidine synthase family.

It is found in the vacuole. The enzyme catalyses 3alpha(S)-strictosidine + H2O = secologanin + tryptamine. It functions in the pathway alkaloid biosynthesis; 3alpha(S)-strictosidine biosynthesis; 3alpha(S)-strictosidine from secologanin and tryptamine: step 1/1. Its function is as follows. Catalyzes the stereospecific condensation of tryptamine with secologanin to form strictosidine, the key intermediate of indole alkaloid biosynthesis. The sequence is that of Protein STRICTOSIDINE SYNTHASE-LIKE 11 from Arabidopsis thaliana (Mouse-ear cress).